The chain runs to 91 residues: N(2)-fixation sustaining protein CowN (91 aa).

This sequence belongs to the CowN family.

Is required to sustain N(2)-dependent growth in the presence of low levels of carbon monoxide (CO). Probably acts by protecting the N(2) fixation ability of the nitrogenase complex, which is inactivated in the presence of CO. The polypeptide is N(2)-fixation sustaining protein CowN (Beijerinckia indica subsp. indica (strain ATCC 9039 / DSM 1715 / NCIMB 8712)).